A 271-amino-acid polypeptide reads, in one-letter code: 4-hydroxy-tetrahydrodipicolinate reductase (271 aa).

NAD(+)-binding positions include 10 to 15 (GAGGRM), glutamate 36, 100 to 102 (GTT), and 124 to 127 (SGNM). Catalysis depends on histidine 157, which acts as the Proton donor/acceptor. Residue histidine 158 coordinates (S)-2,3,4,5-tetrahydrodipicolinate. Catalysis depends on lysine 161, which acts as the Proton donor. Residue 167–168 (GT) coordinates (S)-2,3,4,5-tetrahydrodipicolinate.

This sequence belongs to the DapB family.

Its subcellular location is the cytoplasm. The catalysed reaction is (S)-2,3,4,5-tetrahydrodipicolinate + NAD(+) + H2O = (2S,4S)-4-hydroxy-2,3,4,5-tetrahydrodipicolinate + NADH + H(+). The enzyme catalyses (S)-2,3,4,5-tetrahydrodipicolinate + NADP(+) + H2O = (2S,4S)-4-hydroxy-2,3,4,5-tetrahydrodipicolinate + NADPH + H(+). Its pathway is amino-acid biosynthesis; L-lysine biosynthesis via DAP pathway; (S)-tetrahydrodipicolinate from L-aspartate: step 4/4. Functionally, catalyzes the conversion of 4-hydroxy-tetrahydrodipicolinate (HTPA) to tetrahydrodipicolinate. In Rhodopseudomonas palustris (strain HaA2), this protein is 4-hydroxy-tetrahydrodipicolinate reductase.